Here is a 422-residue protein sequence, read N- to C-terminus: Tyrosine--tRNA ligase (422 aa).

Residue Tyr35 participates in L-tyrosine binding. The 'HIGH' region signature appears at Pro40–His49. L-tyrosine contacts are provided by Tyr170 and Gln174. Residues Lys232–Thr236 carry the 'KMSKS' region motif. Residue Lys235 coordinates ATP. Residues Leu355 to Tyr421 enclose the S4 RNA-binding domain.

Belongs to the class-I aminoacyl-tRNA synthetase family. TyrS type 1 subfamily. In terms of assembly, homodimer.

It localises to the cytoplasm. It carries out the reaction tRNA(Tyr) + L-tyrosine + ATP = L-tyrosyl-tRNA(Tyr) + AMP + diphosphate + H(+). In terms of biological role, catalyzes the attachment of tyrosine to tRNA(Tyr) in a two-step reaction: tyrosine is first activated by ATP to form Tyr-AMP and then transferred to the acceptor end of tRNA(Tyr). The protein is Tyrosine--tRNA ligase of Bacillus pumilus (strain SAFR-032).